The following is a 500-amino-acid chain: Aspartyl/glutamyl-tRNA(Asn/Gln) amidotransferase subunit B (500 aa).

Belongs to the GatB/GatE family. GatB subfamily. As to quaternary structure, heterotrimer of A, B and C subunits.

The enzyme catalyses L-glutamyl-tRNA(Gln) + L-glutamine + ATP + H2O = L-glutaminyl-tRNA(Gln) + L-glutamate + ADP + phosphate + H(+). It catalyses the reaction L-aspartyl-tRNA(Asn) + L-glutamine + ATP + H2O = L-asparaginyl-tRNA(Asn) + L-glutamate + ADP + phosphate + 2 H(+). In terms of biological role, allows the formation of correctly charged Asn-tRNA(Asn) or Gln-tRNA(Gln) through the transamidation of misacylated Asp-tRNA(Asn) or Glu-tRNA(Gln) in organisms which lack either or both of asparaginyl-tRNA or glutaminyl-tRNA synthetases. The reaction takes place in the presence of glutamine and ATP through an activated phospho-Asp-tRNA(Asn) or phospho-Glu-tRNA(Gln). The protein is Aspartyl/glutamyl-tRNA(Asn/Gln) amidotransferase subunit B of Rhizobium johnstonii (strain DSM 114642 / LMG 32736 / 3841) (Rhizobium leguminosarum bv. viciae).